An 883-amino-acid chain; its full sequence is UTP--glucose-1-phosphate uridylyltransferase 3, chloroplastic (883 aa).

The N-terminal 72 residues, 1-72, are a transit peptide targeting the chloroplast; it reads MANPQASPIL…HQVRHVSTVP (72 aa).

The protein belongs to the UDPGP type 1 family. Mg(2+) is required as a cofactor.

Its subcellular location is the plastid. The protein localises to the chloroplast. The catalysed reaction is alpha-D-glucose 1-phosphate + UTP + H(+) = UDP-alpha-D-glucose + diphosphate. Its activity is regulated as follows. Inhibited by pyrophosphate. Functionally, involved in the biosynthesis of sulfolipids in the chloroplast. Catalyzes the first committed step in sulfolipid biosynthesis. Converts glucose 1-phosphate to UDP-glucose, the precursor of the polar head of sulfolipid. In addition to glucose 1-phosphate, can use galactose 1-phosphate, but with much lower activity. No uridyltransferase activity with other hexose monophosphates. Specific for UTP and cannot use ATP, CTP, and GTP. The chain is UTP--glucose-1-phosphate uridylyltransferase 3, chloroplastic from Arabidopsis thaliana (Mouse-ear cress).